The chain runs to 203 residues: Small ribosomal subunit protein uS4 (203 aa).

An S4 RNA-binding domain is found at R93 to K153.

Belongs to the universal ribosomal protein uS4 family. In terms of assembly, part of the 30S ribosomal subunit. Contacts protein S5. The interaction surface between S4 and S5 is involved in control of translational fidelity.

One of the primary rRNA binding proteins, it binds directly to 16S rRNA where it nucleates assembly of the body of the 30S subunit. Functionally, with S5 and S12 plays an important role in translational accuracy. The sequence is that of Small ribosomal subunit protein uS4 from Lactobacillus delbrueckii subsp. bulgaricus (strain ATCC 11842 / DSM 20081 / BCRC 10696 / JCM 1002 / NBRC 13953 / NCIMB 11778 / NCTC 12712 / WDCM 00102 / Lb 14).